The sequence spans 109 residues: Nucleoid-associated protein Psyc_0793 (109 aa).

This sequence belongs to the YbaB/EbfC family. In terms of assembly, homodimer.

It is found in the cytoplasm. Its subcellular location is the nucleoid. Its function is as follows. Binds to DNA and alters its conformation. May be involved in regulation of gene expression, nucleoid organization and DNA protection. The polypeptide is Nucleoid-associated protein Psyc_0793 (Psychrobacter arcticus (strain DSM 17307 / VKM B-2377 / 273-4)).